The primary structure comprises 576 residues: A-type ATP synthase subunit A (576 aa).

228–235 (GGFGTGKT) contacts ATP.

Belongs to the ATPase alpha/beta chains family. Has multiple subunits with at least A(3), B(3), C, D, E, F, H, I and proteolipid K(x).

The protein resides in the cell membrane. It carries out the reaction ATP + H2O + 4 H(+)(in) = ADP + phosphate + 5 H(+)(out). In terms of biological role, component of the A-type ATP synthase that produces ATP from ADP in the presence of a proton gradient across the membrane. The A chain is the catalytic subunit. This chain is A-type ATP synthase subunit A, found in Methanothrix thermoacetophila (strain DSM 6194 / JCM 14653 / NBRC 101360 / PT) (Methanosaeta thermophila).